The primary structure comprises 433 residues: Glutamyl-tRNA reductase (433 aa).

Residues threonine 49–arginine 52, serine 109, glutamate 114–glutamine 116, and glutamine 120 contribute to the substrate site. Catalysis depends on cysteine 50, which acts as the Nucleophile. Residue glycine 198–serine 203 participates in NADP(+) binding.

This sequence belongs to the glutamyl-tRNA reductase family. As to quaternary structure, homodimer.

It catalyses the reaction (S)-4-amino-5-oxopentanoate + tRNA(Glu) + NADP(+) = L-glutamyl-tRNA(Glu) + NADPH + H(+). It functions in the pathway porphyrin-containing compound metabolism; protoporphyrin-IX biosynthesis; 5-aminolevulinate from L-glutamyl-tRNA(Glu): step 1/2. Its pathway is porphyrin-containing compound metabolism; chlorophyll biosynthesis. In terms of biological role, catalyzes the NADPH-dependent reduction of glutamyl-tRNA(Glu) to glutamate 1-semialdehyde (GSA). This Prochlorococcus marinus subsp. pastoris (strain CCMP1986 / NIES-2087 / MED4) protein is Glutamyl-tRNA reductase.